Reading from the N-terminus, the 631-residue chain is Phosphomethylpyrimidine synthase (631 aa).

Residues Asn239, Met268, Tyr297, His333, 353–355, 394–397, and Glu433 each bind substrate; these read SRG and DGLR. His437 is a Zn(2+) binding site. Tyr460 is a substrate binding site. His501 is a binding site for Zn(2+). Residues Cys581, Cys584, and Cys589 each coordinate [4Fe-4S] cluster.

Belongs to the ThiC family. Homodimer. [4Fe-4S] cluster is required as a cofactor.

The enzyme catalyses 5-amino-1-(5-phospho-beta-D-ribosyl)imidazole + S-adenosyl-L-methionine = 4-amino-2-methyl-5-(phosphooxymethyl)pyrimidine + CO + 5'-deoxyadenosine + formate + L-methionine + 3 H(+). It participates in cofactor biosynthesis; thiamine diphosphate biosynthesis. In terms of biological role, catalyzes the synthesis of the hydroxymethylpyrimidine phosphate (HMP-P) moiety of thiamine from aminoimidazole ribotide (AIR) in a radical S-adenosyl-L-methionine (SAM)-dependent reaction. This is Phosphomethylpyrimidine synthase from Salmonella enteritidis PT4 (strain P125109).